Reading from the N-terminus, the 597-residue chain is Elongation factor 4 (597 aa).

The 183-residue stretch at 2–184 (DHIRNFSIIA…ALIAKVPPPK (183 aa)) folds into the tr-type G domain. GTP is bound by residues 14-19 (DHGKST) and 131-134 (NKID).

It belongs to the TRAFAC class translation factor GTPase superfamily. Classic translation factor GTPase family. LepA subfamily.

The protein resides in the cell inner membrane. It catalyses the reaction GTP + H2O = GDP + phosphate + H(+). In terms of biological role, required for accurate and efficient protein synthesis under certain stress conditions. May act as a fidelity factor of the translation reaction, by catalyzing a one-codon backward translocation of tRNAs on improperly translocated ribosomes. Back-translocation proceeds from a post-translocation (POST) complex to a pre-translocation (PRE) complex, thus giving elongation factor G a second chance to translocate the tRNAs correctly. Binds to ribosomes in a GTP-dependent manner. The polypeptide is Elongation factor 4 (Cupriavidus pinatubonensis (strain JMP 134 / LMG 1197) (Cupriavidus necator (strain JMP 134))).